The chain runs to 245 residues: MKIIFNADDFGISPGAVYGILESYKKGVVKSTTLLANSPAFDLAVEVAKENPGLDIGAHLTLTFGSPLLQGLETLTDDDGRFRKNYTALENGLADVDMGEVERELTAQIKKILGAGLTISHFDTHHSIEPLIYPIQHKLAEKYGVSIRRHADVSDFGAIKTPDLFETAFYADGVSFETIKKIVQAHIGTNDVVEVMTHPAFIDETLREISSYVEPRIKEVSILTSRELQAYLGQQEVEVISFRDL.

Histidine 59 and histidine 125 together coordinate Mg(2+).

It belongs to the YdjC deacetylase family. Homodimer. Mg(2+) is required as a cofactor.

In terms of biological role, probably catalyzes the deacetylation of acetylated carbohydrates an important step in the degradation of oligosaccharides. This is Carbohydrate deacetylase from Listeria welshimeri serovar 6b (strain ATCC 35897 / DSM 20650 / CCUG 15529 / CIP 8149 / NCTC 11857 / SLCC 5334 / V8).